Here is a 262-residue protein sequence, read N- to C-terminus: Lysosomal-associated transmembrane protein 5 (262 aa).

5 consecutive transmembrane segments (helical) span residues 19-39 (IATT…FIEH), 64-84 (ISSF…LIGV), 92-112 (LLPF…TLLG), 134-154 (FPLM…LCSS), and 184-204 (FIKM…FKVY). The residue at position 259 (Y259) is a Phosphotyrosine.

Belongs to the LAPTM4/LAPTM5 transporter family. In terms of assembly, binds to ubiquitin.

The protein resides in the lysosome membrane. In terms of biological role, may have a special functional role during embryogenesis and in adult hematopoietic cells. The sequence is that of Lysosomal-associated transmembrane protein 5 (LAPTM5) from Pongo abelii (Sumatran orangutan).